A 267-amino-acid chain; its full sequence is Phosphatidylglycerol--prolipoprotein diacylglyceryl transferase (267 aa).

A run of 3 helical transmembrane segments spans residues 18-38 (LSVRWYGLMYLIGFAFAMWFA), 57-77 (FLFYGMLGVILGGRIGYVLFY), and 95-115 (GGMSFHGGTLGVITAVVIFAW). R140 is a binding site for a 1,2-diacyl-sn-glycero-3-phospho-(1'-sn-glycerol). 3 helical membrane-spanning segments follow: residues 173–193 (SQLYEAFFEGLVLFLILQWFI), 200–220 (GSVAGVFLLGYGTFRFCIEYF), and 233–253 (FISMGQILSLPMIVGGLGLLI).

The protein belongs to the Lgt family.

Its subcellular location is the cell inner membrane. The enzyme catalyses L-cysteinyl-[prolipoprotein] + a 1,2-diacyl-sn-glycero-3-phospho-(1'-sn-glycerol) = an S-1,2-diacyl-sn-glyceryl-L-cysteinyl-[prolipoprotein] + sn-glycerol 1-phosphate + H(+). It participates in protein modification; lipoprotein biosynthesis (diacylglyceryl transfer). In terms of biological role, catalyzes the transfer of the diacylglyceryl group from phosphatidylglycerol to the sulfhydryl group of the N-terminal cysteine of a prolipoprotein, the first step in the formation of mature lipoproteins. The chain is Phosphatidylglycerol--prolipoprotein diacylglyceryl transferase from Pseudoalteromonas translucida (strain TAC 125).